The following is a 245-amino-acid chain: 4-hydroxy-tetrahydrodipicolinate reductase (245 aa).

NAD(+) is bound by residues 7 to 12 (GAKGKV), 75 to 77 (GTT), and 102 to 105 (APNF). His-132 functions as the Proton donor/acceptor in the catalytic mechanism. His-133 contributes to the (S)-2,3,4,5-tetrahydrodipicolinate binding site. Lys-136 (proton donor) is an active-site residue. 142–143 (GT) is a (S)-2,3,4,5-tetrahydrodipicolinate binding site.

It belongs to the DapB family.

It localises to the cytoplasm. It catalyses the reaction (S)-2,3,4,5-tetrahydrodipicolinate + NAD(+) + H2O = (2S,4S)-4-hydroxy-2,3,4,5-tetrahydrodipicolinate + NADH + H(+). The enzyme catalyses (S)-2,3,4,5-tetrahydrodipicolinate + NADP(+) + H2O = (2S,4S)-4-hydroxy-2,3,4,5-tetrahydrodipicolinate + NADPH + H(+). It functions in the pathway amino-acid biosynthesis; L-lysine biosynthesis via DAP pathway; (S)-tetrahydrodipicolinate from L-aspartate: step 4/4. In terms of biological role, catalyzes the conversion of 4-hydroxy-tetrahydrodipicolinate (HTPA) to tetrahydrodipicolinate. This Mycobacterium sp. (strain JLS) protein is 4-hydroxy-tetrahydrodipicolinate reductase.